The following is a 155-amino-acid chain: MNPVRKRRLFIVLAILAGVGAAVALALSALQQNINLFYTPSQIAAGEAPEGARIRAGGLVEKGSLQRDATSLAATFRVTDGVATVTVRYQGILPDLFREGQGIVALGRVDAGGMLQADEVLAKHDENYMPPEVSQALEKSGMLKHYENGKPGGAQ.

The Cytoplasmic segment spans residues 1 to 8 (MNPVRKRR). The chain crosses the membrane as a helical; Signal-anchor for type II membrane protein span at residues 9–29 (LFIVLAILAGVGAAVALALSA). Topologically, residues 30 to 155 (LQQNINLFYT…YENGKPGGAQ (126 aa)) are periplasmic. Residues H124 and Y128 each contribute to the heme site.

Belongs to the CcmE/CycJ family.

Its subcellular location is the cell inner membrane. Its function is as follows. Heme chaperone required for the biogenesis of c-type cytochromes. Transiently binds heme delivered by CcmC and transfers the heme to apo-cytochromes in a process facilitated by CcmF and CcmH. This Azotobacter vinelandii (strain DJ / ATCC BAA-1303) protein is Cytochrome c-type biogenesis protein CcmE.